Reading from the N-terminus, the 384-residue chain is Probable beta-1,3-galactosyltransferase 1 (384 aa).

A helical; Signal-anchor for type II membrane protein membrane pass occupies residues 21 to 43; it reads SVFFMCLASFCLGMFFTNRMWNI. Residues Asn73 and Asn105 are each glycosylated (N-linked (GlcNAc...) asparagine).

This sequence belongs to the glycosyltransferase 31 family. Mn(2+) is required as a cofactor.

The protein resides in the golgi apparatus membrane. It participates in protein modification; protein glycosylation. Its function is as follows. Beta-1,3-galactosyltransferase that transfers galactose from UDP-galactose to substrates with a terminal glycosyl residue. In Arabidopsis thaliana (Mouse-ear cress), this protein is Probable beta-1,3-galactosyltransferase 1 (B3GALT1).